The primary structure comprises 432 residues: 23S rRNA (uracil(1939)-C(5))-methyltransferase RlmD (432 aa).

The TRAM domain occupies 1 to 54; sequence MNPVVDILSLDHEGHGVARLDGKVTFVDGALAGERAEIAIFRKHAKYNSANAVA. 4 residues coordinate [4Fe-4S] cluster: Cys-67, Cys-73, Cys-76, and Cys-155. The S-adenosyl-L-methionine site is built by Gln-264, Phe-293, Asn-298, Glu-314, Asn-341, and Asp-362. Cys-389 (nucleophile) is an active-site residue.

The protein belongs to the class I-like SAM-binding methyltransferase superfamily. RNA M5U methyltransferase family. RlmD subfamily.

It carries out the reaction uridine(1939) in 23S rRNA + S-adenosyl-L-methionine = 5-methyluridine(1939) in 23S rRNA + S-adenosyl-L-homocysteine + H(+). Its function is as follows. Catalyzes the formation of 5-methyl-uridine at position 1939 (m5U1939) in 23S rRNA. The chain is 23S rRNA (uracil(1939)-C(5))-methyltransferase RlmD from Thiobacillus denitrificans (strain ATCC 25259 / T1).